Here is a 489-residue protein sequence, read N- to C-terminus: Dipeptide and tripeptide permease B (489 aa).

Topologically, residues 1 to 27 (MNTTAPTGLLQQPRPFFMIFFVELWER) are cytoplasmic. Residues 28–48 (FGYYGVQGILAVFFVKQLGFS) traverse the membrane as a helical segment. Residues 49 to 52 (QEQA) lie on the Periplasmic side of the membrane. A helical membrane pass occupies residues 53 to 73 (FITFGAFAALVYGLISIGGYV). The Cytoplasmic portion of the chain corresponds to 74–82 (GDHLLGTKR). Residues 83–103 (TLVLGAIVLAIGYFMTGMSLL) traverse the membrane as a helical segment. Topologically, residues 104-106 (NPD) are periplasmic. A helical membrane pass occupies residues 107–127 (LIFIALGTIAVGNGLFKANPA). Residues 128-146 (SLLSKCYQPKDPRLDGAFT) lie on the Cytoplasmic side of the membrane. The helical transmembrane segment at 147-167 (LFYMSINIGSLLSLSLAPVIA) threads the bilayer. Residues 168–172 (DKFGY) lie on the Periplasmic side of the membrane. Residues 173–193 (AVTYNLCGAGLIVALLVYFAC) traverse the membrane as a helical segment. The Cytoplasmic segment spans residues 194-214 (RGMVKNIGSEPDHKPLRFRNL). The helical transmembrane segment at 215-235 (LLVLLGTVVMIFLCAWLMHNV) threads the bilayer. A topological domain (periplasmic) is located at residue Lys236. Residues 237–257 (IANLVLIVLSIVVTIFFFREA) form a helical membrane-spanning segment. Over 258–267 (FRLDKTGRNK) the chain is Cytoplasmic. Residues 268-288 (MFVAFILMIEAVLFYILYAQM) traverse the membrane as a helical segment. The Periplasmic portion of the chain corresponds to 289–315 (PTSLNFFAINNVHHEILGFAINPVSFQ). The helical transmembrane segment at 316–338 (ALNPFWVVVASPVLAAIYTRLGS) threads the bilayer. The Cytoplasmic portion of the chain corresponds to 339–348 (KGKDLTMPMK). The chain crosses the membrane as a helical span at residues 349-369 (FTLGMFLCALGFLTAAAGMWF). Topologically, residues 370–379 (ADAQGLTSPW) are periplasmic. A helical membrane pass occupies residues 380-400 (FIVLVYLFQSLGELLISALGL). Residues 401–410 (AMVAALVPQH) are Cytoplasmic-facing. Residues 411–431 (LMGFILGMWFLTQAAAFLLGG) form a helical membrane-spanning segment. At 432-454 (YVATFTAVPENITDPLQTLPIYT) the chain is on the periplasmic side. The chain crosses the membrane as a helical span at residues 455–475 (GVFSKIGLVTLAVTVVMAIMV). The Cytoplasmic segment spans residues 476 to 489 (PWLNRMINTPGTEQ).

Belongs to the major facilitator superfamily. Proton-dependent oligopeptide transporter (POT/PTR) (TC 2.A.17) family. DtpB subfamily.

The protein localises to the cell inner membrane. Functionally, proton-dependent permease that transports di- and tripeptides. The protein is Dipeptide and tripeptide permease B of Salmonella typhimurium (strain LT2 / SGSC1412 / ATCC 700720).